Here is a 771-residue protein sequence, read N- to C-terminus: Topoisomerase 1-associated factor 2 (771 aa).

3 disordered regions span residues 48 to 69 (NSIN…SIQS), 271 to 330 (EGVV…ISFD), and 346 to 367 (SDMH…KSSL). Over residues 51–69 (NNCSDPSPTSPSSQNSIQS) the composition is skewed to low complexity. A compositionally biased stretch (polar residues) spans 275–294 (TQGSDNNKENIPSSTQQQKN). The span at 295 to 307 (DGAKRAESKDLDL) shows a compositional bias: basic and acidic residues. Over residues 346-359 (SDMHIQYSNPSSGA) the composition is skewed to polar residues. Ser-397 carries the post-translational modification Phosphoserine. A Phosphothreonine modification is found at Thr-405. The tract at residues 633 to 771 (NSKDKVEATS…KYVESDEDDQ (139 aa)) is disordered. Residues 640-652 (ATSNSTAQEQEQV) are compositionally biased toward polar residues. Low complexity predominate over residues 690–709 (SHSSPSSSSSMSLESSLDSS).

This sequence to yeast YJL076w. In terms of assembly, interacts with HPR1.

It localises to the nucleus. The protein is Topoisomerase 1-associated factor 2 (TOF2) of Saccharomyces cerevisiae (strain ATCC 204508 / S288c) (Baker's yeast).